The chain runs to 572 residues: Ribonuclease Y (572 aa).

A helical transmembrane segment spans residues 1-21; the sequence is MPTLYVILSLLLGLIGGVLVQ. 2 disordered regions span residues 59–85 and 110–142; these read HEAA…DAAE and QLEA…ERED. Composition is skewed to basic and acidic residues over residues 110–119 and 129–142; these read QLEAEREQAK and LSTD…ERED. The 61-residue stretch at 262–322 folds into the KH domain; the sequence is SVSVVPIPSD…LRREVARHVL (61 aa). One can recognise an HD domain in the interval 388-481; the sequence is VLKHSVQVAH…VAAADAISAA (94 aa).

This sequence belongs to the RNase Y family.

The protein localises to the cell membrane. Endoribonuclease that initiates mRNA decay. The sequence is that of Ribonuclease Y from Deinococcus radiodurans (strain ATCC 13939 / DSM 20539 / JCM 16871 / CCUG 27074 / LMG 4051 / NBRC 15346 / NCIMB 9279 / VKM B-1422 / R1).